We begin with the raw amino-acid sequence, 185 residues long: Ribosome-recycling factor (185 aa).

Belongs to the RRF family.

Its subcellular location is the cytoplasm. Functionally, responsible for the release of ribosomes from messenger RNA at the termination of protein biosynthesis. May increase the efficiency of translation by recycling ribosomes from one round of translation to another. The protein is Ribosome-recycling factor of Salmonella paratyphi A (strain ATCC 9150 / SARB42).